Reading from the N-terminus, the 575-residue chain is Intermediate filament protein ifd-1 (575 aa).

The head stretch occupies residues Met1 to Glu56. The region spanning Glu53–Arg406 is the IF rod domain. The segment at Ile57 to Phe88 is coil 1A. Residues Arg89–Tyr102 are linker 1. A coil 1B region spans residues Tyr103–Glu240. The segment at Ile241 to Arg258 is linker 12. Residues Glu259 to Ser408 are coil 2. The interval Tyr409–Ser572 is tail. The 117-residue stretch at Asn459–His575 folds into the LTD domain.

Belongs to the intermediate filament family.

The protein resides in the cytoplasm. Cytoplasmic intermediate filaments provide mechanical strength to cells. Not essential protein. The chain is Intermediate filament protein ifd-1 from Caenorhabditis elegans.